We begin with the raw amino-acid sequence, 88 residues long: Phosphocarrier protein HPr (88 aa).

The 88-residue stretch at 1 to 88 folds into the HPr domain; sequence MEKRDFHVVA…ETMKKEGLSE (88 aa). The Pros-phosphohistidine intermediate role is filled by H15. S46 is subject to Phosphoserine; by HPrK/P.

Belongs to the HPr family.

The protein resides in the cytoplasm. Its activity is regulated as follows. Phosphorylation on Ser-46 inhibits the phosphoryl transfer from enzyme I to HPr. In terms of biological role, general (non sugar-specific) component of the phosphoenolpyruvate-dependent sugar phosphotransferase system (sugar PTS). This major carbohydrate active-transport system catalyzes the phosphorylation of incoming sugar substrates concomitantly with their translocation across the cell membrane. The phosphoryl group from phosphoenolpyruvate (PEP) is transferred to the phosphoryl carrier protein HPr by enzyme I. Phospho-HPr then transfers it to the PTS EIIA domain. P-Ser-HPr interacts with the catabolite control protein A (CcpA), forming a complex that binds to DNA at the catabolite response elements cre, operator sites preceding a large number of catabolite-regulated genes. Thus, P-Ser-HPr is a corepressor in carbon catabolite repression (CCR), a mechanism that allows bacteria to coordinate and optimize the utilization of available carbon sources. P-Ser-HPr also plays a role in inducer exclusion, in which it probably interacts with several non-PTS permeases and inhibits their transport activity. This Latilactobacillus sakei (Lactobacillus sakei) protein is Phosphocarrier protein HPr (ptsH).